A 495-amino-acid chain; its full sequence is MNKEILAVVEAVSNEKSLPREKIFEALEIALATATKKKYEQEIDVRVSINRKTGNFSTFRRWMVVDIVVHPTKEITLEAACFEGEQVKINDYVEDKIESVNFDRITTQTAKQVIVQKVREAERAMLVDQFRKHIGQIITGIVKKISRDNLTLDLGNNAEALILREGMLPRENFRPGDRIRGILYGVYPEARGAQLFLSRSKTEMLIELFRIEVPEIGEEVIEIKAAARDPGSRAKIAVKTNDKRIDPIGACVGMRGARVQAVSSELCGERIDIILWDDNPAQFVINAMAPADVVSIIVDEDHHTMDIAVDSSNLAQAIGRNGQNVRLASQISGWELNVMTTEDLRSKHKEEAYAAFNIFKKNLNVSEKVIKTLVKEGFSSLEELAYIPLNELLEINNLTEREVQLVREGAKNGLLLLELDQKNQIKNKKIEQALLNVNGMNELLALKLAEKNIFTVEELANQGIDDLIDIENLNSEQAGLLIMAARNICWFSSKV.

Residues 135-200 (GQIITGIVKK…RGAQLFLSRS (66 aa)) enclose the S1 motif domain. One can recognise a KH domain in the interval 302–370 (HHTMDIAVDS…KNLNVSEKVI (69 aa)). 2 repeat units span residues 364-414 (NVSE…KNGL) and 439-489 (GMNE…RNIC). Residues 364 to 489 (NVSEKVIKTL…LLIMAARNIC (126 aa)) form a 2 X 51 AA approximate repeats region.

Belongs to the NusA family. As to quaternary structure, monomer. Binds directly to the core enzyme of the DNA-dependent RNA polymerase and to nascent RNA.

It localises to the cytoplasm. Participates in both transcription termination and antitermination. The polypeptide is Transcription termination/antitermination protein NusA (Buchnera aphidicola subsp. Schizaphis graminum (strain Sg)).